The sequence spans 415 residues: M protein, serotype 6 (415 aa).

Residues 1–42 (MAKNNTNRHYSLRKLKKGTASVAVALSVIGAGLVVNTNEVSA) form the signal peptide. Coiled-coil stretches lie at residues 54–133 (DKAR…LKKI) and 170–340 (EASR…GKAS). 3 repeat units span residues 69–75 (MLQANND), 76–82 (KLTTENK), and 83–89 (NLTDQNK). Residues 69–103 (MLQANNDKLTTENKNLTDQNKELKAEENRLTTENK) form a 5 X 7 AA approximate tandem repeats of [KMNR]-L-[TQ]-[TDA]-[ENQ]-N-[NDK] region. The segment covering 75-86 (DKLTTENKNLTD) has biased composition (polar residues). Disordered regions lie at residues 75–125 (DKLT…ESKE), 157–189 (QELAKKDEGNKVSEASRKGLRRDLDASREAKKQ), 202–231 (DKVKEEKQISDASRKGLRRDLDASREAKKQ), and 247–277 (KEEKQISDASRQGLRRDLDASREAKKQVEKA). Composition is skewed to basic and acidic residues over residues 87–100 (QNKELKAEENRLTT), 108–125 (KLSEAEEEAANKEQESKE), and 158–189 (ELAKKDEGNKVSEASRKGLRRDLDASREAKKQ). The stretch at 90–96 (ELKAEEN) is one 4; approximate repeat. The stretch at 97 to 103 (RLTTENK) is repeat 5. C repeat units follow at residues 160-194 (AKKDEGNKVSEASRKGLRRDLDASREAKKQVEKDL), 202-236 (DKVKEEKQISDASRKGLRRDLDASREAKKQVEKDL), and 244-278 (DKVKEEKQISDASRQGLRRDLDASREAKKQVEKAL). The binding to CD46 stretch occupies residues 211–279 (SDASRKGLRR…AKKQVEKALE (69 aa)). The tract at residues 211 to 279 (SDASRKGLRR…AKKQVEKALE (69 aa)) is two directly repeated 27 amino acid blocks separated by 15 amino acids. Basic and acidic residues predominate over residues 260-277 (LRRDLDASREAKKQVEKA). The tract at residues 280 to 343 (EANSKLAALE…LRAGKASDSQ (64 aa)) is hydrophilic. 4 D repeats span residues 311–316 (AKLEAE), 317–322 (AKALKE), 325–330 (AKQAEE), and 332–337 (AKLRAG). Residues 332–387 (AKLRAGKASDSQTPDAKPGNKVVPGKGQAPQAGTKPNQNKAPMKETKRQLPSTGET) are disordered. The LPXTG sorting signal motif lies at 381 to 385 (LPSTG). Pentaglycyl murein peptidoglycan amidated threonine is present on T384. Residues 385 to 415 (GETANPFFTAAALTVMATAGVAAVVKRKEEN) constitute a propeptide, removed by sortase.

The protein belongs to the M protein family.

It localises to the secreted. Its subcellular location is the cell wall. Functionally, mediates the attachment of S.pyogenes to skin epithelial cells through the binding of the human membrane cofactor protein CD46. Also binds to the factor H and factor H-like protein 1. These interactions could contribute to the fact that the M6 protein protects the bacterium from the phagocytosis by regulating the complement activation on the bacterial surface. This chain is M protein, serotype 6 (emm6), found in Streptococcus pyogenes serotype M6 (strain ATCC BAA-946 / MGAS10394).